A 46-amino-acid polypeptide reads, in one-letter code: uncharacterized protein (46 aa).

To equivalent protein in phage 82.

This is an uncharacterized protein from Escherichia coli (strain K12).